The chain runs to 644 residues: Sodium/potassium/calcium exchanger 3 (644 aa).

The first 44 residues, 1–44 (MRPSGDEDRARRRRRRRRRRDLLLSQLCFLASVALLLWSLSSLR), serve as a signal peptide directing secretion. Topologically, residues 45-107 (EQKELDLMDL…DIFTNEDRRQ (63 aa)) are extracellular. Residues asparagine 71 and asparagine 86 are each glycosylated (N-linked (GlcNAc...) asparagine). Residues 108–128 (GAVVLHVLCAIYMFYALAIVC) form a helical membrane-spanning segment. The Cytoplasmic segment spans residues 129 to 153 (DDFFVPSLEKICERLHLSEDVAGAT). Residues 149–189 (VAGATFMAAGSSAPELFTSVIGVFITKGDVGVGTIVGSAVF) form an Alpha-1 repeat. A helical transmembrane segment spans residues 154–174 (FMAAGSSAPELFTSVIGVFIT). At 175–182 (KGDVGVGT) the chain is on the extracellular side. Residues 183–203 (IVGSAVFNILCIIGVCGLFAG) traverse the membrane as a helical segment. The Cytoplasmic segment spans residues 204–210 (QVVALSS). The helical transmembrane segment at 211–231 (WCLLRDSIYYTLSVIALIVFI) threads the bilayer. Over 232–234 (YDE) the chain is Extracellular. A helical transmembrane segment spans residues 235 to 255 (KVSWWESLVLVLMYLIYIVIM). Over 256 to 484 (KYNACIHQCF…WFMVTFASST (229 aa)) the chain is Cytoplasmic. Phosphoserine is present on serine 308. Positions 405 to 442 (AEAGNETENENEDNENDEEEEEDEDDDEGPYTPFDTPS) are disordered. The segment covering 409–433 (NETENENEDNENDEEEEEDEDDDEG) has biased composition (acidic residues). A helical membrane pass occupies residues 485 to 505 (LWIAAFSYMMVWMVTIIGYTL). Residues 506–510 (GIPDV) are Extracellular-facing. The helical transmembrane segment at 511-531 (IMGITFLAAGTSVPDCMASLI) threads the bilayer. The Alpha-2 repeat unit spans residues 518–549 (AAGTSVPDCMASLIVARQGMGDMAVSNSIGSN). Topologically, residues 532-549 (VARQGMGDMAVSNSIGSN) are cytoplasmic. A helical membrane pass occupies residues 550–570 (VFDILIGLGLPWALQTLAVDY). Topologically, residues 571–580 (GSYIRLNSRG) are extracellular. Residues 581–601 (LIYSVGLLLASVFVTVFGVHL) traverse the membrane as a helical segment. The Cytoplasmic segment spans residues 602–615 (NKWQLDKKLGCGCL). A helical transmembrane segment spans residues 616 to 636 (LLYGVFLCFSIMTEFNVFTFV). Residues 637–644 (NLPMCGDH) lie on the Extracellular side of the membrane.

This sequence belongs to the Ca(2+):cation antiporter (CaCA) (TC 2.A.19) family. SLC24A subfamily. In terms of tissue distribution, abundant in the brain. Expressed at low levels in the aorta, uterus and intestine.

It is found in the cell membrane. It catalyses the reaction Ca(2+)(out) + K(+)(out) + 4 Na(+)(in) = Ca(2+)(in) + K(+)(in) + 4 Na(+)(out). Functionally, calcium, potassium:sodium antiporter that transports 1 Ca(2+) and 1 K(+) in exchange for 4 Na(+). The sequence is that of Sodium/potassium/calcium exchanger 3 (SLC24A3) from Homo sapiens (Human).